Here is a 959-residue protein sequence, read N- to C-terminus: Isoleucine--tRNA ligase (959 aa).

Positions 60–70 (PYANGSLHMGH) match the 'HIGH' region motif. Glu-569 provides a ligand contact to L-isoleucyl-5'-AMP. The 'KMSKS' region signature appears at 610–614 (KMSKS). Residue Lys-613 coordinates ATP. The Zn(2+) site is built by Cys-928, Cys-931, Cys-948, and Cys-951.

This sequence belongs to the class-I aminoacyl-tRNA synthetase family. IleS type 1 subfamily. In terms of assembly, monomer. It depends on Zn(2+) as a cofactor.

It is found in the cytoplasm. It catalyses the reaction tRNA(Ile) + L-isoleucine + ATP = L-isoleucyl-tRNA(Ile) + AMP + diphosphate. In terms of biological role, catalyzes the attachment of isoleucine to tRNA(Ile). As IleRS can inadvertently accommodate and process structurally similar amino acids such as valine, to avoid such errors it has two additional distinct tRNA(Ile)-dependent editing activities. One activity is designated as 'pretransfer' editing and involves the hydrolysis of activated Val-AMP. The other activity is designated 'posttransfer' editing and involves deacylation of mischarged Val-tRNA(Ile). The sequence is that of Isoleucine--tRNA ligase from Rippkaea orientalis (strain PCC 8801 / RF-1) (Cyanothece sp. (strain PCC 8801)).